The primary structure comprises 438 residues: Glutamyl-tRNA(Gln) amidotransferase subunit D (438 aa).

The Asparaginase/glutaminase domain occupies 92–422 (PDVTIIGTGG…EEVRRMMLTN (331 aa)). Residues Thr102, Thr178, Asp179, and Lys256 contribute to the active site.

The protein belongs to the asparaginase 1 family. GatD subfamily. As to quaternary structure, heterodimer of GatD and GatE.

It catalyses the reaction L-glutamyl-tRNA(Gln) + L-glutamine + ATP + H2O = L-glutaminyl-tRNA(Gln) + L-glutamate + ADP + phosphate + H(+). Allows the formation of correctly charged Gln-tRNA(Gln) through the transamidation of misacylated Glu-tRNA(Gln) in organisms which lack glutaminyl-tRNA synthetase. The reaction takes place in the presence of glutamine and ATP through an activated gamma-phospho-Glu-tRNA(Gln). The GatDE system is specific for glutamate and does not act on aspartate. The protein is Glutamyl-tRNA(Gln) amidotransferase subunit D of Pyrococcus horikoshii (strain ATCC 700860 / DSM 12428 / JCM 9974 / NBRC 100139 / OT-3).